Consider the following 381-residue polypeptide: Erythronate-4-phosphate dehydrogenase (381 aa).

2 residues coordinate substrate: Ser-45 and Thr-67. Residues 127–128, Asp-147, and Thr-176 contribute to the NAD(+) site; that span reads QV. Residue Arg-209 is part of the active site. Residue Asp-233 participates in NAD(+) binding. Residue Glu-238 is part of the active site. Catalysis depends on His-255, which acts as the Proton donor. Position 258 (Gly-258) interacts with NAD(+). Position 259 (Tyr-259) interacts with substrate.

Belongs to the D-isomer specific 2-hydroxyacid dehydrogenase family. PdxB subfamily. As to quaternary structure, homodimer.

The protein resides in the cytoplasm. The catalysed reaction is 4-phospho-D-erythronate + NAD(+) = (R)-3-hydroxy-2-oxo-4-phosphooxybutanoate + NADH + H(+). It participates in cofactor biosynthesis; pyridoxine 5'-phosphate biosynthesis; pyridoxine 5'-phosphate from D-erythrose 4-phosphate: step 2/5. Functionally, catalyzes the oxidation of erythronate-4-phosphate to 3-hydroxy-2-oxo-4-phosphonooxybutanoate. This is Erythronate-4-phosphate dehydrogenase from Vibrio cholerae serotype O1 (strain ATCC 39315 / El Tor Inaba N16961).